The sequence spans 629 residues: Extracellular metalloproteinase 10 (629 aa).

The N-terminal stretch at 1 to 19 is a signal peptide; sequence MHGLLLAAGLLSLPLYTIA. A propeptide spanning residues 20 to 240 is cleaved from the precursor; that stretch reads HTQPSGALSR…VHNVVDYVAH (221 aa). Asn-281 and Asn-331 each carry an N-linked (GlcNAc...) asparagine glycan. Residue His-424 participates in Zn(2+) binding. Residue Glu-425 is part of the active site. His-428 is a Zn(2+) binding site. Asn-469 and Asn-617 each carry an N-linked (GlcNAc...) asparagine glycan.

This sequence belongs to the peptidase M36 family. The cofactor is Zn(2+).

Its subcellular location is the secreted. In terms of biological role, secreted metalloproteinase that allows assimilation of proteinaceous substrates and probably acts as a virulence factor. This chain is Extracellular metalloproteinase 10 (MEP10), found in Coccidioides posadasii (strain C735) (Valley fever fungus).